Consider the following 166-residue polypeptide: Large ribosomal subunit protein uL10 (166 aa).

The protein belongs to the universal ribosomal protein uL10 family. As to quaternary structure, part of the ribosomal stalk of the 50S ribosomal subunit. The N-terminus interacts with L11 and the large rRNA to form the base of the stalk. The C-terminus forms an elongated spine to which L12 dimers bind in a sequential fashion forming a multimeric L10(L12)X complex.

Forms part of the ribosomal stalk, playing a central role in the interaction of the ribosome with GTP-bound translation factors. The chain is Large ribosomal subunit protein uL10 from Oceanobacillus iheyensis (strain DSM 14371 / CIP 107618 / JCM 11309 / KCTC 3954 / HTE831).